The sequence spans 375 residues: Neuropeptide Y receptor type 4-2 (375 aa).

Residues 1–39 (MNTSHLLALLLPKSPQGENRSKPLGTPYNFSEHCQDSVD) are Extracellular-facing. N-linked (GlcNAc...) asparagine glycans are attached at residues Asn-2, Asn-19, and Asn-29. A helical membrane pass occupies residues 40–60 (VMVFIVTSYSIETVVGVLGNL). Residues 61-87 (CLMCVTVRQKEKANVTNLLIANLAFSD) lie on the Cytoplasmic side of the membrane. A helical transmembrane segment spans residues 88–108 (FLMCLLCQPLTAVYTIMDYWI). The Extracellular segment spans residues 109–116 (FGETLCKM). Cysteines 114 and 201 form a disulfide. Residues 117–137 (SAFIQCMSVTVSILSLVLVAL) form a helical membrane-spanning segment. At 138–155 (ERHQLIINPTGWKPSISQ) the chain is on the cytoplasmic side. Residues 156-176 (AYLGIVLIWVIACVLSLPFLA) form a helical membrane-spanning segment. The Extracellular segment spans residues 177–212 (NSILENVFHKNHSKALEFLADKVVCTESWPLAHHRT). A glycan (N-linked (GlcNAc...) asparagine) is linked at Asn-187. Residues 213–233 (IYTTFLLLFQYCLPLGFILVC) traverse the membrane as a helical segment. Residues 234–263 (YARIYRRLQRQGRVFHKGTYSLRAGHMKQV) lie on the Cytoplasmic side of the membrane. A helical transmembrane segment spans residues 264–284 (NVVLVVMVVAFAVLWLPLHVF). The Extracellular segment spans residues 285–301 (NSLEDWHHEAIPICHGN). Residues 302–322 (LIFLVCHLLAMASTCVNPFIY) traverse the membrane as a helical segment. Residues 323-375 (GFLNTNFKKEIKALVLTCQQSAPLEESEHLPLSTVHTEVSKGSLRLSGRSNPI) lie on the Cytoplasmic side of the membrane. A lipid anchor (S-palmitoyl cysteine) is attached at Cys-340.

This sequence belongs to the G-protein coupled receptor 1 family.

It is found in the cell membrane. Its function is as follows. G protein-coupled receptor for PPY/pancreatic polypeptide/PP, NPY/neuropeptide Y and PYY/peptide YY that is negatively coupled to cAMP. The rank order of affinity for these polypeptides and their derivatives is PP, PP (2-36) and [Ile-31, Gln-34] PP &gt; [Pro-34] PYY &gt; PYY and [Leu-31, Pro-34] NPY &gt; NPY &gt; PYY (3-36) and NPY (2-36) &gt; PP (13-36) &gt; PP (31-36) &gt; NPY free acid. This is Neuropeptide Y receptor type 4-2 from Homo sapiens (Human).